The chain runs to 348 residues: Trace amine-associated receptor 9 (348 aa).

Residues 1–33 (MTSDFSPEPPMELCYENVNGSCIKSSYAPWPRA) lie on the Extracellular side of the membrane. N-linked (GlcNAc...) asparagine glycosylation is present at Asn19. Intrachain disulfides connect Cys22-Cys186 and Cys105-Cys190. A helical membrane pass occupies residues 34–58 (ILYGVLGLGALLAVFGNLLVIIAIL). At 59–68 (HFKQLHTPTN) the chain is on the cytoplasmic side. Residues 69–90 (FLVASLACADFLVGVTVMPFST) form a helical membrane-spanning segment. Topologically, residues 91-105 (VRSVESCWYFGESYC) are extracellular. The chain crosses the membrane as a helical span at residues 106–128 (KFHTCFDTSFCFASLFHLCCISI). Spermidine-binding residues include Asp112 and Thr113. The Cytoplasmic segment spans residues 129 to 148 (DRYIAVTDPLTYPTKFTVSV). Residues 149–170 (SGLCIALSWFFSVTYSFSIFYT) traverse the membrane as a helical segment. Residues 171–196 (GANEEGIEELVVALTCVGGCQAPLNQ) are Extracellular-facing. The segment at 174-187 (EEGIEELVVALTCV) is extracellular Loop 2 (ECL2). A helical transmembrane segment spans residues 197–218 (NWVLLCFLLFFLPTVVMVFLYG). Topologically, residues 219–256 (RIFLVAKYQARKIEGTANQAQASSESYKERVAKRERKA) are cytoplasmic. The chain crosses the membrane as a helical span at residues 257–280 (AKTLGIAMAAFLVSWLPYIIDAVI). The Extracellular portion of the chain corresponds to 281-293 (DAYMNFITPAYVY). Residues 294-314 (EILVWCVYYNSAMNPLIYAFF) traverse the membrane as a helical segment. Over 315–348 (YPWFRKAIKLIVSGKVFRADSSTTNLFSEEAGAG) the chain is Cytoplasmic.

This sequence belongs to the G-protein coupled receptor 1 family. Specifically expressed in neurons of the olfactory epithelium.

It localises to the cell membrane. Its function is as follows. Olfactory receptor specific for trace amines, such as triethylamine, N,N-dimethylcyclohexylamine (DMCHA), beta-phenylethylamine (beta-PEA), cadaverine (CAD) and polyamines such as spermine and spermidine. Trace amine compounds are enriched in animal body fluids and act on trace amine-associated receptors (TAARs) to elicit both intraspecific and interspecific innate behaviors. Trace amine-binding causes a conformation change that triggers signaling via G(s)-class of G alpha proteins (GNAL or GNAS). In mature olfactory sensory neurons, Taar9 is coupled with GNAL/G(olf)G alpha protein and mediates activation of adenylate cyclase activity to activate cAMP signaling and eventually transmit odorant signals to achieve membrane depolarization. In immature olfactory sensory neurons, Taar9 is coupled with GNAS/G(s) G alpha proteins. The chain is Trace amine-associated receptor 9 from Mus musculus (Mouse).